The following is a 264-amino-acid chain: MDNRPIGFLDSGVGGLTVVRELMRQLPHEEIVYIGDSARAPYGPRPAEQIREYTWQLVNFLLTKDVKMIVIACNTATAVVWEEIKAQLDIPVLGVILPGASAAIKSSQGGKIGVIGTPMTVQSDIYRKKIHDLDPDLQVESLACPKFAPLVESGALSTSVTKKVVYETLRPLVGKVDSLILGCTHYPLLRPIIQNVMGPKVQLIDSGAECVRDISVLLNYFEINRGRDAGPLHHRFYTTASSQSFAQIGEEWLEKEIHVEHVEL.

Residues 10–11 and 42–43 each bind substrate; these read DS and YG. Residue Cys73 is the Proton donor/acceptor of the active site. Position 74 to 75 (74 to 75) interacts with substrate; it reads NT. Cys183 acts as the Proton donor/acceptor in catalysis. A substrate-binding site is contributed by 184 to 185; it reads TH.

Belongs to the aspartate/glutamate racemases family.

It carries out the reaction L-glutamate = D-glutamate. It participates in cell wall biogenesis; peptidoglycan biosynthesis. Provides the (R)-glutamate required for cell wall biosynthesis. This chain is Glutamate racemase, found in Streptococcus pneumoniae serotype 19F (strain G54).